We begin with the raw amino-acid sequence, 111 residues long: Cytochrome c (111 aa).

Ala-1 is subject to N-acetylalanine. Cys-22, Cys-25, and His-26 together coordinate heme c. Lys-80 carries the post-translational modification N6,N6,N6-trimethyllysine. Residue Met-88 participates in heme c binding. Lys-94 is subject to N6,N6,N6-trimethyllysine.

This sequence belongs to the cytochrome c family. In terms of processing, binds 1 heme c group covalently per subunit.

Its subcellular location is the mitochondrion intermembrane space. Functionally, electron carrier protein. The oxidized form of the cytochrome c heme group can accept an electron from the heme group of the cytochrome c1 subunit of cytochrome reductase. Cytochrome c then transfers this electron to the cytochrome oxidase complex, the final protein carrier in the mitochondrial electron-transport chain. This chain is Cytochrome c, found in Brassica napus (Rape).